Reading from the N-terminus, the 760-residue chain is Phosphoribosylformylglycinamidine synthase subunit PurL (760 aa).

A disordered region spans residues 1-25 (MNMSLPADRDTAKKPSAQKPSAHAQ). H69 is an active-site residue. Residues Y72 and K115 each contribute to the ATP site. Mg(2+) is bound at residue E117. Substrate-binding positions include 118–121 (SHNH) and R140. H119 serves as the catalytic Proton acceptor. Residue D141 coordinates Mg(2+). Q265 contributes to the substrate binding site. Residue D293 coordinates Mg(2+). Position 337-339 (337-339 (ESQ)) interacts with substrate. ATP-binding residues include N519 and G556. N557 provides a ligand contact to Mg(2+). Residue S559 participates in substrate binding.

Belongs to the FGAMS family. In terms of assembly, monomer. Part of the FGAM synthase complex composed of 1 PurL, 1 PurQ and 2 PurS subunits.

Its subcellular location is the cytoplasm. The catalysed reaction is N(2)-formyl-N(1)-(5-phospho-beta-D-ribosyl)glycinamide + L-glutamine + ATP + H2O = 2-formamido-N(1)-(5-O-phospho-beta-D-ribosyl)acetamidine + L-glutamate + ADP + phosphate + H(+). It participates in purine metabolism; IMP biosynthesis via de novo pathway; 5-amino-1-(5-phospho-D-ribosyl)imidazole from N(2)-formyl-N(1)-(5-phospho-D-ribosyl)glycinamide: step 1/2. Part of the phosphoribosylformylglycinamidine synthase complex involved in the purines biosynthetic pathway. Catalyzes the ATP-dependent conversion of formylglycinamide ribonucleotide (FGAR) and glutamine to yield formylglycinamidine ribonucleotide (FGAM) and glutamate. The FGAM synthase complex is composed of three subunits. PurQ produces an ammonia molecule by converting glutamine to glutamate. PurL transfers the ammonia molecule to FGAR to form FGAM in an ATP-dependent manner. PurS interacts with PurQ and PurL and is thought to assist in the transfer of the ammonia molecule from PurQ to PurL. This chain is Phosphoribosylformylglycinamidine synthase subunit PurL, found in Tropheryma whipplei (strain TW08/27) (Whipple's bacillus).